A 190-amino-acid chain; its full sequence is MTYEIQASVREAQGTGASRRLRREGQIPGILYGEGQEPVAIAVDHKTVFYALEKESFHTALIKLSLNGETKDVIVRDFQMHPFRREVQHIDFQAVKADQPVRIRVPLHIVNAENSQAVKLQGGRVSLLNTSVEVVALPANIPAFLDLDCAEVVAGDILHLSDIKLPEGVESVSLKRNENLAVATVTGKKR.

The protein belongs to the bacterial ribosomal protein bL25 family. CTC subfamily. Part of the 50S ribosomal subunit; part of the 5S rRNA/L5/L18/L25 subcomplex. Contacts the 5S rRNA. Binds to the 5S rRNA independently of L5 and L18.

In terms of biological role, this is one of the proteins that binds to the 5S RNA in the ribosome where it forms part of the central protuberance. The polypeptide is Large ribosomal subunit protein bL25 (Neisseria meningitidis serogroup C / serotype 2a (strain ATCC 700532 / DSM 15464 / FAM18)).